The following is a 176-amino-acid chain: F(420)H(2) dehydrogenase subunit J (176 aa).

The next 5 helical transmembrane spans lie at 13 to 33 (TAVFGLLALVTVFFAIFVVIA), 39 to 59 (AGLALIMCMFGVAGLYILLNA), 64 to 84 (VIQVLVYIGAIGVLILFAVML), 99 to 119 (PLAFLVCLLFVAVVVTGAFGT), and 140 to 160 (IGMLIFTHFVAPFEVLSIVLL).

It belongs to the complex I subunit 6 family. In terms of assembly, the FPO complex is composed of at least 13 different subunits. FpoA, FpoH, FpoJ, FpoK, FpoL, FpoM and FpoN proteins constitute the membrane sector of the complex.

Its subcellular location is the cell membrane. It catalyses the reaction methanophenazine + reduced coenzyme F420-(gamma-L-Glu)(n) = dihydromethanophenazine + oxidized coenzyme F420-(gamma-L-Glu)(n) + H(+). In terms of biological role, component of the F(420)H(2) dehydrogenase (FPO complex) which is part of the energy-conserving F(420)H(2):heterodisulfide oxidoreductase system. The membrane-bound electron transfer system of the complex plays an important role in the metabolism of methylotrophic methanogens when the organisms grow on methanol or methylamines. Catalyzes the oxidation of methanophenazine to dihydromethanophenazine. It shuttles electrons from F(420)H(2), via FAD and iron-sulfur (Fe-S) centers, to methanophenazine (an electron carrier in the membrane). It couples the redox reaction to proton translocation (for every two electrons transferred, two hydrogen ions are translocated across the cytoplasmic membrane), and thus conserves the redox energy in a proton gradient. It also catalyzes the oxidation of F(420)H(2) with quinones such as 2,3-dimethyl-1,4-naphthoquinone, 2-methyl-1,4-naphthoquinone and tetramethyl-p-benzoquinone. In Methanosarcina mazei (strain ATCC BAA-159 / DSM 3647 / Goe1 / Go1 / JCM 11833 / OCM 88) (Methanosarcina frisia), this protein is F(420)H(2) dehydrogenase subunit J (fpoJ).